The chain runs to 383 residues: Ribosomal RNA large subunit methyltransferase G (383 aa).

It belongs to the methyltransferase superfamily. RlmG family.

It localises to the cytoplasm. The enzyme catalyses guanosine(1835) in 23S rRNA + S-adenosyl-L-methionine = N(2)-methylguanosine(1835) in 23S rRNA + S-adenosyl-L-homocysteine + H(+). In terms of biological role, specifically methylates the guanine in position 1835 (m2G1835) of 23S rRNA. The sequence is that of Ribosomal RNA large subunit methyltransferase G from Vibrio atlanticus (strain LGP32) (Vibrio splendidus (strain Mel32)).